The sequence spans 225 residues: Glutathione S-transferase U3 (225 aa).

A GST N-terminal domain is found at 6–86 (EGVKLIGSWA…YIDQTWTNNP (81 aa)). Residues 16–17 (SP), 43–44 (VK), 57–58 (KV), and 70–71 (ES) each bind glutathione. Residues 91–218 (SPYDKAMARF…EKHIEHMMKI (128 aa)) enclose the GST C-terminal domain. Thr152 is subject to Phosphothreonine.

The protein belongs to the GST superfamily. Tau family.

It localises to the cytoplasm. Its subcellular location is the cytosol. It carries out the reaction RX + glutathione = an S-substituted glutathione + a halide anion + H(+). Functionally, may be involved in the conjugation of reduced glutathione to a wide number of exogenous and endogenous hydrophobic electrophiles and have a detoxification role against certain herbicides. This Arabidopsis thaliana (Mouse-ear cress) protein is Glutathione S-transferase U3 (GSTU3).